Here is a 140-residue protein sequence, read N- to C-terminus: Organic hydroperoxide resistance protein-like (140 aa).

Belongs to the OsmC/Ohr family.

The sequence is that of Organic hydroperoxide resistance protein-like from Staphylococcus aureus (strain MRSA252).